The primary structure comprises 304 residues: Glycine--tRNA ligase alpha subunit (304 aa).

It belongs to the class-II aminoacyl-tRNA synthetase family. In terms of assembly, tetramer of two alpha and two beta subunits.

The protein resides in the cytoplasm. The enzyme catalyses tRNA(Gly) + glycine + ATP = glycyl-tRNA(Gly) + AMP + diphosphate. The sequence is that of Glycine--tRNA ligase alpha subunit from Serratia proteamaculans (strain 568).